The following is a 408-amino-acid chain: F-box A protein 155 (408 aa).

A disordered region spans residues Met-1 to Lys-22.

Belongs to the FTH family.

This Caenorhabditis elegans protein is F-box A protein 155 (fbxa-155).